The sequence spans 161 residues: Phosphopantetheine adenylyltransferase (161 aa).

T10 lines the substrate pocket. ATP is bound by residues 10–11 (TF) and H18. The substrate site is built by K42, M74, and R88. Residues 89-91 (GVR), E99, and 124-130 (LSFVSSS) contribute to the ATP site.

It belongs to the bacterial CoaD family. Homohexamer. It depends on Mg(2+) as a cofactor.

It localises to the cytoplasm. It carries out the reaction (R)-4'-phosphopantetheine + ATP + H(+) = 3'-dephospho-CoA + diphosphate. It participates in cofactor biosynthesis; coenzyme A biosynthesis; CoA from (R)-pantothenate: step 4/5. In terms of biological role, reversibly transfers an adenylyl group from ATP to 4'-phosphopantetheine, yielding dephospho-CoA (dPCoA) and pyrophosphate. This chain is Phosphopantetheine adenylyltransferase, found in Proteus mirabilis (strain HI4320).